Reading from the N-terminus, the 391-residue chain is Cold-shock protein CS120 (391 aa).

17 tandem repeats follow at residues 9–31, 49–62, 72–94, 95–108, 115–128, 135–148, 156–178, 179–192, 199–212, 220–242, 243–256, 263–276, 284–306, 307–320, 327–340, 350–363, and 374–391. Residues 9-391 form a 6 X 23 AA approximate repeats region; the sequence is GEKKGIMEKI…KIKDKLPGQH (383 aa). The span at 21–33 shows a compositional bias: basic and acidic residues; sequence KLPGGHGDHKETA. Residues 21 to 391 form a disordered region; sequence KLPGGHGDHK…KIKDKLPGQH (371 aa). The span at 34 to 59 shows a compositional bias: low complexity; sequence GTHGHPGTATHGAPATGGAYGQQGHA. Residues 49–363 are 11 X 14 AA approximate repeats; the sequence is TGGAYGQQGH…HGQHGHTGTT (315 aa). Basic and acidic residues predominate over residues 70–92; the sequence is HAGEKKGVMENIKDKLPGGHQDH. Low complexity predominate over residues 93–145; sequence QQTGGTYGQQGHTGTATHGTPATGGTYGQQGHTGTATHGTPATGGTYGEQGHT. Residues 155–176 are compositionally biased toward basic and acidic residues; sequence TGEKKGVMENIKEKLPGGHGDH. A compositionally biased stretch (low complexity) spans 177–196; that stretch reads QQTGGTYGQQGHTGTATHGT. Residues 219-240 show a composition bias toward basic and acidic residues; sequence TGEKKGVMENIKDKLPGGHGDH. Composition is skewed to low complexity over residues 241 to 260 and 272 to 282; these read QQTG…TQGT and HTGMTGAGTHS. Residues 283–304 are compositionally biased toward basic and acidic residues; it reads TGEKKGVMENIKEKLPGGHSDH. Low complexity-rich tracts occupy residues 305 to 324 and 333 to 351; these read QQTG…THGT and QHGH…TATG. Residues 361–372 show a composition bias toward gly residues; the sequence is GTTGTGTHGSDG. The span at 373 to 391 shows a compositional bias: basic and acidic residues; the sequence is IGEKKSLMDKIKDKLPGQH.

Belongs to the plant dehydrin family.

In terms of biological role, may reduce intracellular freezing damage during winter by hydrogen-bonding to the lattice of the nascent ice crystals, thus modifying the structure and/or propagation of ice crystals. The sequence is that of Cold-shock protein CS120 (CS120) from Triticum aestivum (Wheat).